The sequence spans 415 residues: Gamma-glutamyl phosphate reductase (415 aa).

The protein belongs to the gamma-glutamyl phosphate reductase family.

It localises to the cytoplasm. It catalyses the reaction L-glutamate 5-semialdehyde + phosphate + NADP(+) = L-glutamyl 5-phosphate + NADPH + H(+). It participates in amino-acid biosynthesis; L-proline biosynthesis; L-glutamate 5-semialdehyde from L-glutamate: step 2/2. Its function is as follows. Catalyzes the NADPH-dependent reduction of L-glutamate 5-phosphate into L-glutamate 5-semialdehyde and phosphate. The product spontaneously undergoes cyclization to form 1-pyrroline-5-carboxylate. In Listeria monocytogenes serotype 4a (strain HCC23), this protein is Gamma-glutamyl phosphate reductase.